The sequence spans 241 residues: Phosphoribosylformylglycinamidine synthase subunit PurQ (241 aa).

A Glutamine amidotransferase type-1 domain is found at 6–241; sequence NVGIVVFPGS…QSLLLASAFA (236 aa). The active-site Nucleophile is the Cys90. Catalysis depends on residues His207 and Glu209.

In terms of assembly, part of the FGAM synthase complex composed of 1 PurL, 1 PurQ and 2 PurS subunits.

It localises to the cytoplasm. The enzyme catalyses N(2)-formyl-N(1)-(5-phospho-beta-D-ribosyl)glycinamide + L-glutamine + ATP + H2O = 2-formamido-N(1)-(5-O-phospho-beta-D-ribosyl)acetamidine + L-glutamate + ADP + phosphate + H(+). It carries out the reaction L-glutamine + H2O = L-glutamate + NH4(+). It participates in purine metabolism; IMP biosynthesis via de novo pathway; 5-amino-1-(5-phospho-D-ribosyl)imidazole from N(2)-formyl-N(1)-(5-phospho-D-ribosyl)glycinamide: step 1/2. In terms of biological role, part of the phosphoribosylformylglycinamidine synthase complex involved in the purines biosynthetic pathway. Catalyzes the ATP-dependent conversion of formylglycinamide ribonucleotide (FGAR) and glutamine to yield formylglycinamidine ribonucleotide (FGAM) and glutamate. The FGAM synthase complex is composed of three subunits. PurQ produces an ammonia molecule by converting glutamine to glutamate. PurL transfers the ammonia molecule to FGAR to form FGAM in an ATP-dependent manner. PurS interacts with PurQ and PurL and is thought to assist in the transfer of the ammonia molecule from PurQ to PurL. The sequence is that of Phosphoribosylformylglycinamidine synthase subunit PurQ from Thermosynechococcus vestitus (strain NIES-2133 / IAM M-273 / BP-1).